Consider the following 402-residue polypeptide: MGSKRVCPDANNSVKSKKAKTLDFLAHPRRKIAIQFFYLGWEHDGLVQQPHTQNTVENHIMQALIKTHLIEDWTKCDFSRCGRTDKGVSAFKQTAAMVVRSLCPGDSGVFWSDSTQEHQKVDYKASGEELPYVKMLNGVLPKTIRVFAWAPVAQTFNARFDCNRRTYKYSFAKADLNLEKMRQGAELLVGEHDFSNFCQIDMNEKRLLQSYVRKVYEVKVEQVSTHPENDMYSMVELTVSGSGFLWHMIRYIVTILQEIGRENEQPSLISQLLDLKKYPSRPQYTLASDTPLCLFDCGYKSEDVEWKVHDYTLKSTVTGLQKTWATYQARSRMMENMLGELTGMAEFSSGDANKGLHEFVQDRPIPSNYIRFENRKMCESLESKKEKMAEKKKNGEESSDKL.

The Nucleophile role is filled by Asp-85. The segment at 383–402 is disordered; it reads SKKEKMAEKKKNGEESSDKL.

It belongs to the tRNA pseudouridine synthase TruA family.

It carries out the reaction a uridine in tRNA = a pseudouridine in tRNA. Formation of pseudouridine at position 38 and 39 in the anticodon stem and loop of transfer RNAs. This Caenorhabditis elegans protein is Probable tRNA pseudouridine synthase tag-124 (tag-124).